The sequence spans 252 residues: Ribosomal RNA small subunit methyltransferase J (252 aa).

S-adenosyl-L-methionine is bound by residues 101-102 (RD), 117-118 (ER), 153-154 (SS), and aspartate 171.

Belongs to the methyltransferase superfamily. RsmJ family.

It localises to the cytoplasm. It carries out the reaction guanosine(1516) in 16S rRNA + S-adenosyl-L-methionine = N(2)-methylguanosine(1516) in 16S rRNA + S-adenosyl-L-homocysteine + H(+). Functionally, specifically methylates the guanosine in position 1516 of 16S rRNA. The chain is Ribosomal RNA small subunit methyltransferase J from Salmonella heidelberg (strain SL476).